The primary structure comprises 687 residues: DNA-directed RNA polymerase subunit beta' (687 aa).

The Zn(2+) site is built by C69, C71, C87, and C90. D492, D494, and D496 together coordinate Mg(2+).

Belongs to the RNA polymerase beta' chain family. RpoC1 subfamily. In plastids the minimal PEP RNA polymerase catalytic core is composed of four subunits: alpha, beta, beta', and beta''. When a (nuclear-encoded) sigma factor is associated with the core the holoenzyme is formed, which can initiate transcription. Requires Mg(2+) as cofactor. It depends on Zn(2+) as a cofactor.

Its subcellular location is the plastid. The protein localises to the chloroplast. It catalyses the reaction RNA(n) + a ribonucleoside 5'-triphosphate = RNA(n+1) + diphosphate. In terms of biological role, DNA-dependent RNA polymerase catalyzes the transcription of DNA into RNA using the four ribonucleoside triphosphates as substrates. The protein is DNA-directed RNA polymerase subunit beta' of Silene latifolia (White campion).